A 424-amino-acid polypeptide reads, in one-letter code: 26S proteasome regulatory subunit 6A homolog A (424 aa).

The disordered stretch occupies residues 1–21 (MATPMVEDTSSFEEDQLASMS). Ala2 is subject to N-acetylalanine. Ser19 is modified (phosphoserine). 212–219 (GPPGTGKT) lines the ATP pocket. Residue Lys235 forms a Glycyl lysine isopeptide (Lys-Gly) (interchain with G-Cter in ubiquitin) linkage. Thr278 bears the O-acetylthreonine mark. Glycyl lysine isopeptide (Lys-Gly) (interchain with G-Cter in ubiquitin) cross-links involve residues Lys279 and Lys416.

This sequence belongs to the AAA ATPase family. As to quaternary structure, component of the 19S regulatory particle (RP/PA700) base subcomplex of the 26S proteasome. The 26S proteasome is composed of a core protease (CP), known as the 20S proteasome, capped at one or both ends by the 19S regulatory particle (RP/PA700). The RP/PA700 complex is composed of at least 17 different subunits in two subcomplexes, the base and the lid, which form the portions proximal and distal to the 20S proteolytic core, respectively. As to expression, ubiquitous.

It is found in the cytoplasm. Its subcellular location is the nucleus. Its function is as follows. The 26S proteasome is involved in the ATP-dependent degradation of ubiquitinated proteins. The regulatory (or ATPase) complex confers ATP dependency and substrate specificity to the 26S complex. Interacts with transit peptides of proteins targeted to the chloroplast, and may be involved in the degradation of unimported plastid protein precursors. Plays a essential role in the gametophyte development. Involved in tolerance to zinc deficiency, possibly through alleviation of oxidative stresses or processing of poly-ubiquitinated proteins. The polypeptide is 26S proteasome regulatory subunit 6A homolog A (Arabidopsis thaliana (Mouse-ear cress)).